The chain runs to 637 residues: Chaperone protein HtpG (637 aa).

The a; substrate-binding stretch occupies residues 1–335 (MQGTVNSERL…SSDLPLNISR (335 aa)). The segment at 336–559 (ETLQNNKIIE…DGSMDIRMER (224 aa)) is b. Positions 560 to 637 (FLREQKQLNY…RMNSVLSQIN (78 aa)) are c.

This sequence belongs to the heat shock protein 90 family. As to quaternary structure, homodimer.

The protein localises to the cytoplasm. In terms of biological role, molecular chaperone. Has ATPase activity. The chain is Chaperone protein HtpG from Ehrlichia ruminantium (strain Gardel).